The primary structure comprises 119 residues: Aspartate 1-decarboxylase (119 aa).

S25 functions as the Schiff-base intermediate with substrate; via pyruvic acid in the catalytic mechanism. Position 25 is a pyruvic acid (Ser) (S25). Residue T57 participates in substrate binding. Y58 acts as the Proton donor in catalysis. 73 to 75 (GAA) provides a ligand contact to substrate.

Belongs to the PanD family. In terms of assembly, heterooctamer of four alpha and four beta subunits. The cofactor is pyruvate. Post-translationally, is synthesized initially as an inactive proenzyme, which is activated by self-cleavage at a specific serine bond to produce a beta-subunit with a hydroxyl group at its C-terminus and an alpha-subunit with a pyruvoyl group at its N-terminus.

Its subcellular location is the cytoplasm. It carries out the reaction L-aspartate + H(+) = beta-alanine + CO2. It functions in the pathway cofactor biosynthesis; (R)-pantothenate biosynthesis; beta-alanine from L-aspartate: step 1/1. Functionally, catalyzes the pyruvoyl-dependent decarboxylation of aspartate to produce beta-alanine. The polypeptide is Aspartate 1-decarboxylase (Ruthia magnifica subsp. Calyptogena magnifica).